The following is a 326-amino-acid chain: Isoaspartyl peptidase/L-asparaginase (326 aa).

Thr185 serves as the catalytic Nucleophile. Substrate-binding positions include 213–216 (RVGD) and 236–239 (TGHG).

Belongs to the Ntn-hydrolase family. Heterodimer of an alpha and beta chain produced by autocleavage. This heterodimer may then dimerize in turn, giving rise to a heterotetramer. Cleaved into an alpha and beta chain by autocatalysis; this activates the enzyme. The N-terminal residue of the beta subunit is responsible for the nucleophile hydrolase activity. In terms of tissue distribution, high expression in the heart and brain while low to minimal expression in the other tissues. In ocular tissues, high levels is observed in the optic nerve and retina while relatively low levels of expression are detected in the iris-ciliary body, lens or retinal pigment epithelium.

It is found in the cytoplasm. It catalyses the reaction L-asparagine + H2O = L-aspartate + NH4(+). The enzyme catalyses Cleavage of a beta-linked Asp residue from the N-terminus of a polypeptide.. Functionally, has both L-asparaginase and beta-aspartyl peptidase activity. May be involved in the production of L-aspartate, which can act as an excitatory neurotransmitter in some brain regions. Is highly active with L-Asp beta-methyl ester. Besides, has catalytic activity toward beta-aspartyl dipeptides and their methyl esters, including beta-L-Asp-L-Phe, beta-L-Asp-L-Phe methyl ester (aspartame), beta-L-Asp-L-Ala, beta-L-Asp-L-Leu and beta-L-Asp-L-Lys. Does not have aspartylglucosaminidase activity and is inactive toward GlcNAc-L-Asn. Likewise, has no activity toward glutamine. This chain is Isoaspartyl peptidase/L-asparaginase (Asrgl1), found in Mus musculus (Mouse).